Consider the following 131-residue polypeptide: Hypocretin neuropeptide precursor (131 aa).

Residues 1-33 (MNLPSTKVSWAAVTLLLLLLLLPPALLSSGAAA) form the signal peptide. Gln34 carries the post-translational modification Pyrrolidone carboxylic acid. 2 disulfides stabilise this stretch: Cys39–Cys45 and Cys40–Cys47. At Leu66 the chain carries Leucine amide. Met97 is modified (methionine amide). Positions 98–131 (GRRAGAEPAPRPCLGRRCSAPAAASVAPGGQSGI) are cleaved as a propeptide — removed in mature form.

This sequence belongs to the orexin family. In terms of processing, specific enzymatic cleavages at paired basic residues yield the different active peptides. Abundantly expressed in subthalamic nucleus but undetectable in other brain regions tested (hypothalamus was not tested) and in heart, placenta, lung, liver, skeletal muscle, kidney and pancreas.

Its subcellular location is the rough endoplasmic reticulum. It localises to the cytoplasmic vesicle. It is found in the synapse. Its function is as follows. Neuropeptides that play a significant role in the regulation of food intake and sleep-wakefulness, possibly by coordinating the complex behavioral and physiologic responses of these complementary homeostatic functions. A broader role in the homeostatic regulation of energy metabolism, autonomic function, hormonal balance and the regulation of body fluids, is also suggested. In terms of biological role, binds to orexin receptors HCRTR1/OX1R and HCRTR2/OX2R with a high affinity. Stimulates food intake. Modulates pituitary luteinizing hormone secretion in an ovarian steroid-dependent manner. Functionally, binds to orexin receptor HCRTR2/OX2R only. Stimulates food intake. Modulates pituitary luteinizing hormone secretion in an ovarian steroid-dependent manner. This is Hypocretin neuropeptide precursor from Homo sapiens (Human).